Consider the following 430-residue polypeptide: MLDIQLLRGQLSQVAERLALRGVTLDSGAFTALEDERKQLQTRTQELQAKRNALSKQIGILKGKGEDASAVMAEVGQLGDELKACEQALPVVLEKLNAFLAGLPNLPQEGVPVGEDETGNVEVRRWGTPRSFDFEVKDHVDLGAALGLDFDTGAKLSGSRFTFMRGQIARLHRALAQFMLDTQTLEHGYTECYAPYIVNREVLVGTGQLPKFKEDMFWVLRGGDEEGGEQYLISTSEIPLTNTVREQILAADALPIKLTAHSPCFRSEAGSAGRDTRGMIRQHQFDKVEMVQIVHPDASNAALEEMVGHAEAILQKLELPYRVITLCTGDMGFSAAKTYDLEVWLPAQNTYREISSCSNCEAFQARRMQARFKTAQGKNELVHTLNGSGLAVGRTLVAVLENYQQADGSIVVPKALVPYMGGLEVLRPAS.

235 to 237 (TSE) lines the L-serine pocket. Residue 266-268 (RSE) coordinates ATP. Glutamate 289 lines the L-serine pocket. 353 to 356 (EISS) contacts ATP. Serine 388 is a binding site for L-serine.

It belongs to the class-II aminoacyl-tRNA synthetase family. Type-1 seryl-tRNA synthetase subfamily. Homodimer. The tRNA molecule binds across the dimer.

The protein localises to the cytoplasm. It carries out the reaction tRNA(Ser) + L-serine + ATP = L-seryl-tRNA(Ser) + AMP + diphosphate + H(+). It catalyses the reaction tRNA(Sec) + L-serine + ATP = L-seryl-tRNA(Sec) + AMP + diphosphate + H(+). It participates in aminoacyl-tRNA biosynthesis; selenocysteinyl-tRNA(Sec) biosynthesis; L-seryl-tRNA(Sec) from L-serine and tRNA(Sec): step 1/1. Its function is as follows. Catalyzes the attachment of serine to tRNA(Ser). Is also able to aminoacylate tRNA(Sec) with serine, to form the misacylated tRNA L-seryl-tRNA(Sec), which will be further converted into selenocysteinyl-tRNA(Sec). The sequence is that of Serine--tRNA ligase from Azoarcus sp. (strain BH72).